Here is a 646-residue protein sequence, read N- to C-terminus: Major capsid protein (646 aa).

This sequence belongs to the NCLDV major capsid protein family. Homotrimer. The membrane-bound form, but not the cytosolic one, assembles into large complexes. Interacts with the minor capsid proteins M1249L and p17; these interactions form a rigid zipper structure that stabilizes the capsomers.

It is found in the virion. It localises to the host endoplasmic reticulum membrane. Its subcellular location is the host cytoplasm. The protein resides in the host cytosol. Capsid protein that self-assembles to form the pseudo-hexameric capsomers of the icosahedral capsid. The capsid is constructed of 2760 pseudo-hexameric capsomers and 12 pentameric capsomers, with a T=277 symmetry, about 200 nm in diameter. The capsid encapsulates the DNA-containing nucleoid, the core shell and the inner membrane. Plays an essential role in virion assembly. Involved in virus attachment to the host cell. The sequence is that of Major capsid protein from Ornithodoros (relapsing fever ticks).